The following is a 306-amino-acid chain: tRNA pseudouridine synthase B (306 aa).

Asp-48 functions as the Nucleophile in the catalytic mechanism.

This sequence belongs to the pseudouridine synthase TruB family. Type 1 subfamily.

The enzyme catalyses uridine(55) in tRNA = pseudouridine(55) in tRNA. Responsible for synthesis of pseudouridine from uracil-55 in the psi GC loop of transfer RNAs. The sequence is that of tRNA pseudouridine synthase B from Ectopseudomonas mendocina (strain ymp) (Pseudomonas mendocina).